Here is a 296-residue protein sequence, read N- to C-terminus: NAD kinase (296 aa).

The active-site Proton acceptor is Asp72. NAD(+) is bound by residues 72–73 (DG), 146–147 (ND), Arg157, Lys174, Asp176, 187–192 (TAYALS), and Gln247.

It belongs to the NAD kinase family. A divalent metal cation is required as a cofactor.

The protein localises to the cytoplasm. It catalyses the reaction NAD(+) + ATP = ADP + NADP(+) + H(+). Its function is as follows. Involved in the regulation of the intracellular balance of NAD and NADP, and is a key enzyme in the biosynthesis of NADP. Catalyzes specifically the phosphorylation on 2'-hydroxyl of the adenosine moiety of NAD to yield NADP. The polypeptide is NAD kinase (Pseudomonas putida (strain ATCC 700007 / DSM 6899 / JCM 31910 / BCRC 17059 / LMG 24140 / F1)).